The chain runs to 257 residues: Phycoerythrobilin:ferredoxin oxidoreductase (257 aa).

The protein belongs to the HY2 family.

The catalysed reaction is (3Z)-phycoerythrobilin + oxidized 2[4Fe-4S]-[ferredoxin] = 15,16-dihydrobiliverdin + reduced 2[4Fe-4S]-[ferredoxin] + 2 H(+). In terms of biological role, catalyzes the two-electron reduction of the C2 and C3(1) diene system of 15,16-dihydrobiliverdin. This is Phycoerythrobilin:ferredoxin oxidoreductase from Synechococcus sp. (strain CC9311).